Consider the following 390-residue polypeptide: MKIHEYQAKEILRRHKANVPFGVVIDKKENASKAHDEVTSKTGGSVVVVKAQIHAGGRGKGGGVKVTKTKEDAIAAVDKILGMQLITPQTGPEGKKVLKVYLEQGIDIAKEYYLSILLDRSIRKTIIMASTEGGMEIEEVAETHPEKILKIAIDPGIGLQVNQARQLAFELGLPAESHKSFQSLLAAIYEAYIKEDASLLEINPLILTKQNEIIAGDCKIDLDENALYRHADNAAFRDITEEDPLEVQASEFNLNYVKLDGNIGCMVNGAGLAMATMDIVKLAGAEPANFLDVGGGANKTTVTNGFKIILGDPNVKGIFVNIFGGIVRCDMVAEGIIEAAKAVDLKVPLVVRLQGTNSELGREVLNKSGLKITGVDDLREAASTIAKLIG.

The ATP-grasp domain occupies 9–248; the sequence is KEILRRHKAN…ITEEDPLEVQ (240 aa). ATP contacts are provided by residues Lys-50, 57 to 59, Glu-103, Ile-106, and Glu-111; that span reads GRG. Mg(2+) contacts are provided by Asn-203 and Asp-217. Substrate contacts are provided by residues Asn-268 and 325–327; that span reads GIV.

This sequence belongs to the succinate/malate CoA ligase beta subunit family. Heterotetramer of two alpha and two beta subunits. Mg(2+) is required as a cofactor.

The enzyme catalyses succinate + ATP + CoA = succinyl-CoA + ADP + phosphate. It carries out the reaction GTP + succinate + CoA = succinyl-CoA + GDP + phosphate. It participates in carbohydrate metabolism; tricarboxylic acid cycle; succinate from succinyl-CoA (ligase route): step 1/1. Its function is as follows. Succinyl-CoA synthetase functions in the citric acid cycle (TCA), coupling the hydrolysis of succinyl-CoA to the synthesis of either ATP or GTP and thus represents the only step of substrate-level phosphorylation in the TCA. The beta subunit provides nucleotide specificity of the enzyme and binds the substrate succinate, while the binding sites for coenzyme A and phosphate are found in the alpha subunit. This chain is Succinate--CoA ligase [ADP-forming] subunit beta, found in Leptospira interrogans serogroup Icterohaemorrhagiae serovar copenhageni (strain Fiocruz L1-130).